The following is a 495-amino-acid chain: uncharacterized protein (495 aa).

Residues 337–360 (STSNRESDCSGNEDDSSNAKYAKK) are disordered.

This is an uncharacterized protein from Caenorhabditis elegans.